Here is a 925-residue protein sequence, read N- to C-terminus: Nuclear pore complex protein Nup107 (925 aa).

An N-acetylmethionine modification is found at methionine 1. Residues serine 4, serine 10, serine 11, and serine 37 each carry the phosphoserine modification. A disordered region spans residues 20–66; the sequence is TRTARKQSAQKRVLLQASQDENFGNTTPRNQVIPRTPSSFRQPFTPT. Polar residues-rich tracts occupy residues 35–49 and 55–66; these read QASQ…TPRN and TPSSFRQPFTPT. Phosphothreonine is present on residues threonine 46 and threonine 55. Residues serine 57 and serine 58 each carry the phosphoserine modification. Arginine 60 carries the post-translational modification Asymmetric dimethylarginine; alternate. Arginine 60 carries the post-translational modification Omega-N-methylarginine; alternate. Threonine 64 is modified (phosphothreonine). Omega-N-methylarginine is present on arginine 68. Phosphoserine is present on residues serine 69 and serine 86.

This sequence belongs to the nucleoporin Nup84/Nup107 family. As to quaternary structure, part of the nuclear pore complex (NPC). Forms part of the Nup160 subcomplex in the nuclear pore which is composed of NUP160, NUP133, NUP107 and Nup96; this complex plays a role in RNA export and in tethering Nup98 and NUP153 to the nucleus. Does not interact with TPR. Interacts with ZNF106. Ubiquitously expressed in fetal and adult tissues.

It localises to the nucleus membrane. The protein localises to the nucleus. The protein resides in the nuclear pore complex. Its subcellular location is the chromosome. It is found in the centromere. It localises to the kinetochore. Functionally, plays a role in the nuclear pore complex (NPC) assembly and/or maintenance. Required for the assembly of peripheral proteins into the NPC. May anchor NUP62 to the NPC. Involved in nephrogenesis. This chain is Nuclear pore complex protein Nup107 (NUP107), found in Homo sapiens (Human).